The sequence spans 179 residues: MIILFRGHMRDNSTEHKTRRAASSKDVRPAELDEVDRRILSLLHGDARMPNNALADTVGIAPSTCHGRVRRLVDLGVIRGFYTDIDPVAVGLPLQAMISVNLQSSARGKIRSFIQQIRRKRQVMDVYFLAGADDFILHVAARDTEDLRSFVVENLNADADVAGTQTSLIFEHLRGAAPI.

Residues 32–93 form the HTH asnC-type domain; sequence LDEVDRRILS…DIDPVAVGLP (62 aa). Positions 51 to 70 form a DNA-binding region, H-T-H motif; the sequence is NNALADTVGIAPSTCHGRVR.

In terms of assembly, homooctamer. Homotetramer. Tetramer of dimers. The N-terminal DNA-binding domains are swapped, forming a dimer, and four dimers are assembled into an octamer through crystal symmetry.

With respect to regulation, the DNA-binding activity of AldR is modulated by interaction of AldR with various amino acids. Alanine, tryptophan, tyrosine and aspartate completely abolish the DNA binding ability of AldR. On the other hand, glutamate and asparagine reduce AldR binding to DNA but do not completely abolish it. Binding of amino acids can lead to structural modifications and changes in oligomeric association. Activity is also inhibited by 3 small molecule inhibitors, tetrahydroquinoline carbonitrile derivative (S010-0261), levothyroxine and liothyronine, which can disrupt the AldR-DNA complex. In terms of biological role, transcriptional regulator that might play a role under hypoxic conditions. Regulates the expression of ald, which encodes L-alanine dehydrogenase. Serves as both an activator for ald expression in the presence of L-alanine and a repressor in the absence of L-alanine. Acts by binding directly to the upstream region of the ald gene. Four AldR-binding sites (O2, O1, O4 and O3) were identified upstream of the ald gene. O2, O1 and O4 are required for the induction of ald expression by alanine, while O3 is directly involved in the repression of ald expression, by occluding the access of RNA polymerase to the ald promoter. In addition to O3, both O1 and O4 are also necessary for full repression of ald expression in the absence of alanine. The protein is HTH-type transcriptional regulator AldR of Mycobacterium tuberculosis (strain ATCC 25618 / H37Rv).